A 123-amino-acid chain; its full sequence is Insulin-like peptide-1 (123 aa).

Positions 1 to 24 (MTTSSYFLLVALGLLLYVCQSSFG) are cleaved as a signal peptide. 4 cysteine pairs are disulfide-bonded: Cys29–Cys106, Cys41–Cys109, Cys53–Cys122, and Cys108–Cys113. Position 34 is a 4-hydroxyproline; partial (Pro34). A propeptide spans 59-102 (EQGGANNARAYTGRTSSLMKRRGFLSLLKKRGKRDEGSLQRSGR) (c peptide). Glu107 bears the 4-carboxyglutamate mark. Glu117 carries the post-translational modification 4-carboxyglutamate; partial.

Belongs to the insulin family. In terms of assembly, heterodimer of A and B chains; disulfide-linked. As to expression, expressed by the venom duct.

The protein localises to the secreted. This venom insulin facilitates prey capture by rapidly inducing hypoglycemic shock. Intraperitoneal injection of this peptide into zebrafish lowers blood glucose with the same potency than human insulin. In vivo, when applied to water, this peptide reduces overall locomotor activity of zebrafish larvae, observed as a significant decrease in the percentage of time spent swimming and movement frequency. This Conus victoriae (Queen Victoria cone) protein is Insulin-like peptide-1.